The following is a 277-amino-acid chain: Urease accessory protein UreD (277 aa).

It belongs to the UreD family. In terms of assembly, ureD, UreF and UreG form a complex that acts as a GTP-hydrolysis-dependent molecular chaperone, activating the urease apoprotein by helping to assemble the nickel containing metallocenter of UreC. The UreE protein probably delivers the nickel.

It is found in the cytoplasm. In terms of biological role, required for maturation of urease via the functional incorporation of the urease nickel metallocenter. The sequence is that of Urease accessory protein UreD from Pseudomonas putida (strain W619).